We begin with the raw amino-acid sequence, 481 residues long: Fibrinogen beta chain (481 aa).

An N-terminal signal peptide occupies residues 1–19; sequence MRHLWLLLLLCVFSVQTQA. A disordered region spans residues 22-81; that stretch reads DDYDEPTDSLDARGHRPVDRRKEEPPSLRPAPPPISGGGYRARPAKATANQKKVERRPPD. Positions 31–47 are enriched in basic and acidic residues; sequence LDARGHRPVDRRKEEPP. Positions 35–37 are beta-chain polymerization, binding distal domain of another fibrin; the sequence is GHR. Residues 149-213 adopt a coiled-coil conformation; that stretch reads QAQVKENENV…SDISAQMEYC (65 aa). 2 cysteine pairs are disulfide-bonded: Cys221-Cys306 and Cys231-Cys260. In terms of domain architecture, Fibrinogen C-terminal spans 222–478; it reads NIPVVSGKEC…RMSMKIRPFF (257 aa). Asn384 is a glycosylation site (N-linked (GlcNAc...) asparagine). An intrachain disulfide couples Cys414 to Cys427.

As to quaternary structure, heterohexamer; disulfide linked. Contains 2 sets of 3 non-identical chains (alpha, beta and gamma). The 2 heterotrimers are in head to head conformation with the N-termini in a small central domain. In terms of processing, conversion of fibrinogen to fibrin is triggered by thrombin, which cleaves fibrinopeptides A and B from alpha and beta chains, and thus exposes the N-terminal polymerization sites responsible for the formation of the soft clot.

It is found in the secreted. In terms of biological role, cleaved by the protease thrombin to yield monomers which, together with fibrinogen alpha (FGA) and fibrinogen gamma (FGG), polymerize to form an insoluble fibrin matrix. Fibrin has a major function in hemostasis as one of the primary components of blood clots. In addition, functions during the early stages of wound repair to stabilize the lesion and guide cell migration during re-epithelialization. Was originally thought to be essential for platelet aggregation, based on in vitro studies using anticoagulated blood. However, subsequent studies have shown that it is not absolutely required for thrombus formation in vivo. Enhances expression of SELP in activated platelets via an ITGB3-dependent pathway. Maternal fibrinogen is essential for successful pregnancy. Fibrin deposition is also associated with infection, where it protects against IFNG-mediated hemorrhage. May also facilitate the immune response via both innate and T-cell mediated pathways. This chain is Fibrinogen beta chain (Fgb), found in Mus musculus (Mouse).